Consider the following 102-residue polypeptide: Large ribosomal subunit protein uL23c (102 aa).

This sequence belongs to the universal ribosomal protein uL23 family. In terms of assembly, part of the 50S ribosomal subunit.

It localises to the plastid. The protein resides in the chloroplast. Binds to 23S rRNA. The chain is Large ribosomal subunit protein uL23c (rpl23) from Trieres chinensis (Marine centric diatom).